Here is an 878-residue protein sequence, read N- to C-terminus: Protein daughter of sevenless (878 aa).

The PH domain occupies 3 to 113 (RTFYEGWLIK…WVNCICQVCH (111 aa)). The segment at 132-176 (ENRTQHTSSSGGLSNSTQNTTTTSLHSSAGTTAPQASVPNAGGSA) is disordered. The segment covering 136 to 159 (QHTSSSGGLSNSTQNTTTTSLHSS) has biased composition (low complexity). Positions 160-169 (AGTTAPQASV) are enriched in polar residues. Residues 246 to 275 (ALIQAQAAAAAAEQLQQQQQQAARLAVSAN) adopt a coiled-coil conformation. The disordered stretch occupies residues 391–437 (NNNASKQRSDSDSESVFTDDDEWAHPLPLRENVDRSTRPSDSSIENE). At Ser-399 the chain carries Phosphoserine. Thr-481 is subject to Phosphothreonine. 2 interaction with DRK regions span residues 638–650 (DCPP…KPKV) and 690–702 (GPPS…KPNA). 2 disordered regions span residues 686-721 (QQPI…SSGA) and 749-773 (LPRQ…RTAS). Polar residues-rich tracts occupy residues 707 to 718 (NSATMSPATRRS) and 760 to 770 (SPGSMSVQHQR). A Phosphothreonine modification is found at Thr-771. Phosphotyrosine occurs at positions 801 and 854.

Interacts with DRK. Phosphorylated on Tyr-801 and Tyr-854 in response to sevenless activation, which initiates the recruitment of the phosphatase CSW.

The protein localises to the cytoplasm. It localises to the membrane. Its function is as follows. Essential component for signaling from various receptor tyrosine kinases such as Sevenless, TORSO and DER. Required for photoreceptor cell and wing development. This Drosophila melanogaster (Fruit fly) protein is Protein daughter of sevenless (dos).